Reading from the N-terminus, the 272-residue chain is Phosphatidylglycerol--prolipoprotein diacylglyceryl transferase (272 aa).

The next 7 membrane-spanning stretches (helical) occupy residues 17–37 (LQVH…WGLA), 55–75 (LVFY…VLFY), 90–110 (VWTG…AMLF), 125–145 (FIAP…FIGG), 174–194 (PSQI…LWWF), 202–222 (MAVS…MEFF), and 230–250 (GFIL…MLLI). Residue Arg-138 participates in a 1,2-diacyl-sn-glycero-3-phospho-(1'-sn-glycerol) binding.

Belongs to the Lgt family.

The protein resides in the cell inner membrane. The catalysed reaction is L-cysteinyl-[prolipoprotein] + a 1,2-diacyl-sn-glycero-3-phospho-(1'-sn-glycerol) = an S-1,2-diacyl-sn-glyceryl-L-cysteinyl-[prolipoprotein] + sn-glycerol 1-phosphate + H(+). It participates in protein modification; lipoprotein biosynthesis (diacylglyceryl transfer). Functionally, catalyzes the transfer of the diacylglyceryl group from phosphatidylglycerol to the sulfhydryl group of the N-terminal cysteine of a prolipoprotein, the first step in the formation of mature lipoproteins. The chain is Phosphatidylglycerol--prolipoprotein diacylglyceryl transferase from Acinetobacter baumannii (strain ACICU).